Here is a 619-residue protein sequence, read N- to C-terminus: DNA mismatch repair protein MutL (619 aa).

Over residues 368–378 the composition is skewed to basic and acidic residues; the sequence is VDEPKQVDEPK. The segment at 368–403 is disordered; that stretch reads VDEPKQVDEPKQSSPVQEPKEEIPSFLPTVESKQND.

This sequence belongs to the DNA mismatch repair MutL/HexB family.

This protein is involved in the repair of mismatches in DNA. It is required for dam-dependent methyl-directed DNA mismatch repair. May act as a 'molecular matchmaker', a protein that promotes the formation of a stable complex between two or more DNA-binding proteins in an ATP-dependent manner without itself being part of a final effector complex. In Geobacillus sp. (strain WCH70), this protein is DNA mismatch repair protein MutL.